The sequence spans 100 residues: NADH-quinone oxidoreductase subunit K (100 aa).

Helical transmembrane passes span 1–21, 28–48, and 64–84; these read MIGLNHYLIVSGLLFCIGLAG, ILLLFFSTEIMLNAINIGFVA, and FIIAIAASEVAIGLGLVILWF.

This sequence belongs to the complex I subunit 4L family. In terms of assembly, NDH-1 is composed of 14 different subunits. Subunits NuoA, H, J, K, L, M, N constitute the membrane sector of the complex.

Its subcellular location is the cell inner membrane. It carries out the reaction a quinone + NADH + 5 H(+)(in) = a quinol + NAD(+) + 4 H(+)(out). Its function is as follows. NDH-1 shuttles electrons from NADH, via FMN and iron-sulfur (Fe-S) centers, to quinones in the respiratory chain. The immediate electron acceptor for the enzyme in this species is believed to be ubiquinone. Couples the redox reaction to proton translocation (for every two electrons transferred, four hydrogen ions are translocated across the cytoplasmic membrane), and thus conserves the redox energy in a proton gradient. The protein is NADH-quinone oxidoreductase subunit K of Helicobacter pylori (strain B38).